The sequence spans 539 residues: Serine/threonine-protein kinase 35 (539 aa).

The tract at residues 103 to 161 is disordered; it reads ITIQGPAPPHLGARRRDEARGARAAPLLLPPPPAAMETGKENGARRGTKSPERKRRSPV. Basic residues predominate over residues 148–160; sequence RGTKSPERKRRSP. Residues 207-535 form the Protein kinase domain; the sequence is YSLLAEIGRG…FELETRMDQV (329 aa). Residues 213 to 221 and K236 each bind ATP; that span reads IGRGSYGVV. The active-site Proton acceptor is the D365.

It belongs to the protein kinase superfamily. Ser/Thr protein kinase family. As to quaternary structure, interacts with PDLIM1/CLP-36. Autophosphorylated.

The protein resides in the nucleus. It is found in the nucleolus. The protein localises to the cytoplasm. The enzyme catalyses L-seryl-[protein] + ATP = O-phospho-L-seryl-[protein] + ADP + H(+). It catalyses the reaction L-threonyl-[protein] + ATP = O-phospho-L-threonyl-[protein] + ADP + H(+). The sequence is that of Serine/threonine-protein kinase 35 (Stk35) from Mus musculus (Mouse).